The sequence spans 382 residues: Pyrimidine monooxygenase RutA (382 aa).

Residues 68-69, Asn-134, Glu-143, 159-160, and Ser-209 contribute to the FMN site; these read IK and RY.

The protein belongs to the NtaA/SnaA/DszA monooxygenase family. RutA subfamily.

The catalysed reaction is uracil + FMNH2 + NADH + O2 = (Z)-3-ureidoacrylate + FMN + NAD(+) + H2O + H(+). It catalyses the reaction thymine + FMNH2 + NADH + O2 = (Z)-2-methylureidoacrylate + FMN + NAD(+) + H2O + H(+). Functionally, catalyzes the pyrimidine ring opening between N-3 and C-4 by an unusual flavin hydroperoxide-catalyzed mechanism, adding oxygen atoms in the process to yield ureidoacrylate peracid, that immediately reacts with FMN forming ureidoacrylate and FMN-N(5)-oxide. The FMN-N(5)-oxide reacts spontaneously with NADH to produce FMN. Requires the flavin reductase RutF to regenerate FMN in vivo. The chain is Pyrimidine monooxygenase RutA from Escherichia coli O81 (strain ED1a).